We begin with the raw amino-acid sequence, 480 residues long: Cysteine--tRNA ligase (480 aa).

Residue Cys-29 participates in Zn(2+) binding. A 'HIGH' region motif is present at residues 31 to 41 (PTVYSDPHLGH). Zn(2+)-binding residues include Cys-220, His-245, and Glu-249. The short motif at 276–280 (KMAKS) is the 'KMSKS' region element. Residue Lys-279 participates in ATP binding.

The protein belongs to the class-I aminoacyl-tRNA synthetase family. Monomer. The cofactor is Zn(2+).

The protein resides in the cytoplasm. It catalyses the reaction tRNA(Cys) + L-cysteine + ATP = L-cysteinyl-tRNA(Cys) + AMP + diphosphate. The polypeptide is Cysteine--tRNA ligase (Thermus thermophilus (strain ATCC BAA-163 / DSM 7039 / HB27)).